Here is a 193-residue protein sequence, read N- to C-terminus: Anthranilate synthase component 2 (193 aa).

The Glutamine amidotransferase type-1 domain maps to 3 to 193; sequence DILLLDNVDS…EQTLAWALAK (191 aa). 57–59 contacts L-glutamine; the sequence is GPG. Catalysis depends on Cys-84, which acts as the Nucleophile; for GATase activity. L-glutamine contacts are provided by residues Gln-88 and 134 to 135; that span reads SL. Residues His-170 and Glu-172 each act as for GATase activity in the active site.

As to quaternary structure, heterotetramer consisting of two non-identical subunits: a beta subunit (TrpG) and a large alpha subunit (TrpE).

The catalysed reaction is chorismate + L-glutamine = anthranilate + pyruvate + L-glutamate + H(+). Its pathway is amino-acid biosynthesis; L-tryptophan biosynthesis; L-tryptophan from chorismate: step 1/5. Part of a heterotetrameric complex that catalyzes the two-step biosynthesis of anthranilate, an intermediate in the biosynthesis of L-tryptophan. In the first step, the glutamine-binding beta subunit (TrpG) of anthranilate synthase (AS) provides the glutamine amidotransferase activity which generates ammonia as a substrate that, along with chorismate, is used in the second step, catalyzed by the large alpha subunit of AS (TrpE) to produce anthranilate. In the absence of TrpG, TrpE can synthesize anthranilate directly from chorismate and high concentrations of ammonia. The chain is Anthranilate synthase component 2 (trpG) from Serratia marcescens.